The following is a 107-amino-acid chain: MAREDVGAPPDHLWVHQEGVYRDEYQRTWVAVVEEETSFLKARVQQVQVPLGDATKPSHLLTSQLPLMWQLYPEERYMDNNSRLWQIQHHLMVRGVQELLLKLLPDD.

The protein belongs to the TCL1 family. In terms of assembly, interacts with AKT1 and AKT2 (via PH domain). Does not interact with AKT3. Not found at a significant level in any tissue.

Enhances the phosphorylation and activation of AKT1 and AKT2. In Mus musculus (Mouse), this protein is Protein p13 MTCP-1 (Mtcp1).